A 375-amino-acid polypeptide reads, in one-letter code: Putative ZDHHC-type palmitoyltransferase 8 (375 aa).

Transmembrane regions (helical) follow at residues 4 to 24 and 40 to 60; these read LFDFVVLSSFIILLPLVTDFL and VVGMILVFFIVSLIFAGVSLW. The N-linked (GlcNAc...) asparagine glycan is linked to N95. Helical transmembrane passes span 105–125, 221–241, and 285–305; these read ITFYFHIFFTIQLVVNLYYYY, FILFIGYTVMALIYACYLSFF, and YSFIFLCCCLIVTASFGILLF. The region spanning 176–226 is the DHHC domain; sequence VSDGKWSTINKPKSHHCRICKRCIDSMDHHCPFAANCIGINNHHYFILFIG. N-linked (GlcNAc...) asparagine glycosylation is present at N343.

The protein belongs to the DHHC palmitoyltransferase family.

The protein resides in the membrane. The enzyme catalyses L-cysteinyl-[protein] + hexadecanoyl-CoA = S-hexadecanoyl-L-cysteinyl-[protein] + CoA. The protein is Putative ZDHHC-type palmitoyltransferase 8 of Dictyostelium discoideum (Social amoeba).